Reading from the N-terminus, the 260-residue chain is Putative ABC transporter substrate-binding lipoprotein YvgL (260 aa).

Residues 1–20 form the signal peptide; it reads MFKKYSIFIAALTAFLLVAG. A lipid anchor (N-palmitoyl cysteine) is attached at C21. C21 carries the S-diacylglycerol cysteine lipid modification. Molybdate contacts are provided by S43, S71, A151, V178, and Y196.

Belongs to the bacterial solute-binding protein ModA family.

The protein localises to the cell membrane. The chain is Putative ABC transporter substrate-binding lipoprotein YvgL (yvgL) from Bacillus subtilis (strain 168).